Reading from the N-terminus, the 1185-residue chain is Pyruvate carboxylase (1185 aa).

The region spanning 32 to 484 is the Biotin carboxylation domain; the sequence is KFTKVLVANR…WTTFIDDTPE (453 aa). The ATP site is built by Lys150, Glu234, and His269. The 198-residue stretch at 154-351 folds into the ATP-grasp domain; that stretch reads RAIAIRCGVP…IVSAQLHVAA (198 aa). Arg326 is an active-site residue. Residues 570-838 form the Pyruvate carboxyltransferase domain; sequence GLIMDTTWRD…QLEFDNNQLR (269 aa). Substrate contacts are provided by residues 578–582 and Arg651; that span reads RDAHQ. Asp579 is an a divalent metal cation binding site. Positions 747, 777, and 779 each coordinate a divalent metal cation. Lys747 is subject to N6-carboxylysine. Thr912 contacts substrate. In terms of domain architecture, Biotinyl-binding spans 1108 to 1183; it reads RADPGNPGHV…NGGDLCAVLE (76 aa). At Lys1149 the chain carries N6-biotinyllysine.

The cofactor is biotin. Requires Zn(2+) as cofactor.

Its subcellular location is the cytoplasm. The enzyme catalyses hydrogencarbonate + pyruvate + ATP = oxaloacetate + ADP + phosphate + H(+). It participates in carbohydrate biosynthesis; gluconeogenesis. Pyruvate carboxylase catalyzes a 2-step reaction, involving the ATP-dependent carboxylation of the covalently attached biotin in the first step and the transfer of the carboxyl group to pyruvate in the second. This chain is Pyruvate carboxylase (pyr1), found in Schizosaccharomyces pombe (strain 972 / ATCC 24843) (Fission yeast).